The sequence spans 172 residues: Translationally-controlled tumor protein (172 aa).

Residues 1 to 172 form the TCTP domain; the sequence is MIIYRDLISH…FKDGLEMEKC (172 aa). A phosphoserine mark is found at Ser46 and Ser53. A Phosphoserine; by PLK1 modification is found at Ser64. Residues 70-172 form a required for reduction of TSC22D1 protein stability region; sequence VDIVMNHHLQ…FKDGLEMEKC (103 aa).

It belongs to the TCTP family. Homodimer. Interacts with STEAP3. Interacts with TSC22D1; interaction results in the destabilization of TSC22D1 protein.

Its subcellular location is the cytoplasm. Involved in calcium binding and microtubule stabilization. Acts as a negative regulator of TSC22D1-mediated apoptosis, via interaction with and destabilization of TSC22D1 protein. The protein is Translationally-controlled tumor protein (Tpt1) of Mus musculus (Mouse).